Here is a 369-residue protein sequence, read N- to C-terminus: Flagellar P-ring protein (369 aa).

The signal sequence occupies residues 1–22; it reads MLNFKHLMAAALLLSTSLGVQA.

Belongs to the FlgI family. The basal body constitutes a major portion of the flagellar organelle and consists of four rings (L,P,S, and M) mounted on a central rod.

Its subcellular location is the periplasm. It is found in the bacterial flagellum basal body. Assembles around the rod to form the L-ring and probably protects the motor/basal body from shearing forces during rotation. This chain is Flagellar P-ring protein, found in Pseudomonas fluorescens (strain ATCC BAA-477 / NRRL B-23932 / Pf-5).